A 243-amino-acid polypeptide reads, in one-letter code: Triosephosphate isomerase (243 aa).

9 to 11 contacts substrate; sequence NWK. His-96 acts as the Electrophile in catalysis. The active-site Proton acceptor is Glu-165. Residues Gly-171, Ser-204, and 225 to 226 contribute to the substrate site; that span reads GG.

The protein belongs to the triosephosphate isomerase family. In terms of assembly, homodimer.

It is found in the cytoplasm. It carries out the reaction D-glyceraldehyde 3-phosphate = dihydroxyacetone phosphate. The protein operates within carbohydrate biosynthesis; gluconeogenesis. Its pathway is carbohydrate degradation; glycolysis; D-glyceraldehyde 3-phosphate from glycerone phosphate: step 1/1. Functionally, involved in the gluconeogenesis. Catalyzes stereospecifically the conversion of dihydroxyacetone phosphate (DHAP) to D-glyceraldehyde-3-phosphate (G3P). This Synechococcus sp. (strain WH7803) protein is Triosephosphate isomerase.